A 171-amino-acid polypeptide reads, in one-letter code: MVILGIDPGSRITGFGVIKVQDNKIYYVASGCIQITEITTPKRLKQIADGITQIINIYAPTEAAIEQIFMFQNPMGAIKLGQARGVAMCTLAINNLEVSEYSAKQIKQAVVGTGGAAKSQVQHMVQSLLGLSKKPPEDAADALAIAICHYHSSKSLAKISGASRVSQKRIK.

Active-site residues include Asp-7, Glu-66, and Asp-138. Residues Asp-7, Glu-66, and Asp-138 each contribute to the Mg(2+) site.

It belongs to the RuvC family. As to quaternary structure, homodimer which binds Holliday junction (HJ) DNA. The HJ becomes 2-fold symmetrical on binding to RuvC with unstacked arms; it has a different conformation from HJ DNA in complex with RuvA. In the full resolvosome a probable DNA-RuvA(4)-RuvB(12)-RuvC(2) complex forms which resolves the HJ. It depends on Mg(2+) as a cofactor.

The protein resides in the cytoplasm. The catalysed reaction is Endonucleolytic cleavage at a junction such as a reciprocal single-stranded crossover between two homologous DNA duplexes (Holliday junction).. Functionally, the RuvA-RuvB-RuvC complex processes Holliday junction (HJ) DNA during genetic recombination and DNA repair. Endonuclease that resolves HJ intermediates. Cleaves cruciform DNA by making single-stranded nicks across the HJ at symmetrical positions within the homologous arms, yielding a 5'-phosphate and a 3'-hydroxyl group; requires a central core of homology in the junction. The consensus cleavage sequence is 5'-(A/T)TT(C/G)-3'. Cleavage occurs on the 3'-side of the TT dinucleotide at the point of strand exchange. HJ branch migration catalyzed by RuvA-RuvB allows RuvC to scan DNA until it finds its consensus sequence, where it cleaves and resolves the cruciform DNA. The sequence is that of Crossover junction endodeoxyribonuclease RuvC from Francisella tularensis subsp. holarctica (strain FTNF002-00 / FTA).